Consider the following 323-residue polypeptide: Pyruvate dehydrogenase E1 component subunit beta (323 aa).

Thiamine diphosphate is bound at residue glutamate 60. K(+)-binding residues include isoleucine 113, alanine 161, isoleucine 162, aspartate 164, and asparagine 166.

As to quaternary structure, heterodimer of an alpha and a beta chain. The cofactor is thiamine diphosphate.

It localises to the plastid. Its subcellular location is the chloroplast. It catalyses the reaction N(6)-[(R)-lipoyl]-L-lysyl-[protein] + pyruvate + H(+) = N(6)-[(R)-S(8)-acetyldihydrolipoyl]-L-lysyl-[protein] + CO2. Its function is as follows. The pyruvate dehydrogenase complex catalyzes the overall conversion of pyruvate to acetyl-CoA and CO(2). It contains multiple copies of three enzymatic components: pyruvate dehydrogenase (E1), dihydrolipoamide acetyltransferase (E2) and lipoamide dehydrogenase (E3). The sequence is that of Pyruvate dehydrogenase E1 component subunit beta (pdhB) from Gracilaria tenuistipitata var. liui (Red alga).